We begin with the raw amino-acid sequence, 284 residues long: TM2 domain-containing protein almondex (284 aa).

Positions 1–32 (MRLQRQCIVVNMRSAIVLIMIFVLTGIRNSET) are cleaved as a signal peptide. The disordered stretch occupies residues 33–63 (ASGGNQMDLSDSKGDHKDNSNASNGNGNAND). Residues 33-225 (ASGGNQMDLS…NWTQGYRWST (193 aa)) lie on the Extracellular side of the membrane. Residues 42–51 (SDSKGDHKDN) are compositionally biased toward basic and acidic residues. The span at 52–63 (SNASNGNGNAND) shows a compositional bias: low complexity. Residues N53, N89, N141, N194, N206, and N216 are each glycosylated (N-linked (GlcNAc...) asparagine). Residues 220 to 267 (GYRWSTALLISLTLGGFGADRFYLGHWQEGIGKLFSFGGLGVWTIIDV) form the TM2 domain. A helical transmembrane segment spans residues 226–246 (ALLISLTLGGFGADRFYLGHW). Residues 247-249 (QEG) lie on the Cytoplasmic side of the membrane. Residues 250–270 (IGKLFSFGGLGVWTIIDVLLI) traverse the membrane as a helical segment. Residues 271–284 (SMHYLGPADGSLYI) are Extracellular-facing.

The protein belongs to the TM2 family. As to expression, expressed in female ovary, mainly in nurse cells (at protein level). Expressed in the brain at low levels (at protein level).

It localises to the membrane. The protein localises to the vesicle. Its function is as follows. Positive regulator of Notch signaling during lateral inhibition and boundary formation. Interacts with Notch signaling at the membrane, at the level of gamma-secretase-mediated S3 cleavage. May regulate Notch signaling by regulating the subcellular localization of N/Notch in a context dependent manner. Maternal neurogenic factor involved in Notch signaling-dependent mesectodermal and neuroectodermal specification during early embryogenesis. Functions cooperatively with bisc/TM2D1 and amrt/TM2D2. Required for maintenance of neuronal function. Involved in imaginal specification of eyes and wings. The protein is TM2 domain-containing protein almondex of Drosophila melanogaster (Fruit fly).